A 593-amino-acid polypeptide reads, in one-letter code: Corrinoid activation enzyme RamQ (593 aa).

The 2Fe-2S ferredoxin-type domain occupies 1 to 76; it reads MRVLFPLLEE…GMEIYASREQ (76 aa). [2Fe-2S] cluster contacts are provided by Cys35, Cys41, Cys44, and Cys60.

The cofactor is [2Fe-2S] cluster.

In terms of biological role, involved in the degradation of the quaternary amines L-proline betaine and L-carnitine. Component of a corrinoid-dependent methyltransferase system that transfers a methyl group from L-proline betaine or L-carnitine to tetrahydrofolate (THF), forming methyl-THF, a key intermediate in the Wood-Ljungdahl acetogenesis pathway. RamQ is not required for the methyl transfer, but it stimulates reduction of reconstituted MtqC from the Co(II) state to the Co(I) state in vitro. It also stimulates the rate of THF methylation. This chain is Corrinoid activation enzyme RamQ, found in Eubacterium limosum.